Reading from the N-terminus, the 79-residue chain is Neurotoxin BmK-M9 (79 aa).

Residues 1–14 (MISFALLLMTGVES) form the signal peptide. The LCN-type CS-alpha/beta domain occupies 16–78 (RDAYIAKPEN…VPIRVPGKCH (63 aa)). Cystine bridges form between C26/C77, C30/C50, C36/C60, and C40/C62. A propeptide (removed by a carboxypeptidase) is located at residue R79.

It belongs to the long (4 C-C) scorpion toxin superfamily. Sodium channel inhibitor family. Alpha subfamily. Expressed by the venom gland.

The protein resides in the secreted. Binds to sodium channels (Nav) and inhibits the inactivation of the activated channels, thereby blocking neuronal transmission. This toxin is active against mammals. This Olivierus martensii (Manchurian scorpion) protein is Neurotoxin BmK-M9.